We begin with the raw amino-acid sequence, 158 residues long: Non-secretory ribonuclease (158 aa).

The first 27 residues, 1–27 (MVPKLFTSQICVLLLFGLLSVEVSLQV), serve as a signal peptide directing secretion. Tryptophan 34 carries a C-linked (Man) tryptophan glycan. Histidine 42 functions as the Proton acceptor in the catalytic mechanism. 4 disulfide bridges follow: cysteine 50/cysteine 110, cysteine 64/cysteine 121, cysteine 82/cysteine 136, and cysteine 89/cysteine 98. Tyrosine 60 is modified (3'-nitrotyrosine). Substrate is bound at residue 65-69 (KNQNT). N-linked (GlcNAc...) asparagine glycans are attached at residues asparagine 86, asparagine 92, and asparagine 111. Histidine 153 functions as the Proton donor in the catalytic mechanism.

This sequence belongs to the pancreatic ribonuclease family. In terms of assembly, interacts with and forms a tight 1:1 complex with RNH1. Dimerization of two such complexes may occur.

The protein resides in the lysosome. It is found in the cytoplasmic granule. It catalyses the reaction an [RNA] containing cytidine + H2O = an [RNA]-3'-cytidine-3'-phosphate + a 5'-hydroxy-ribonucleotide-3'-[RNA].. It carries out the reaction an [RNA] containing uridine + H2O = an [RNA]-3'-uridine-3'-phosphate + a 5'-hydroxy-ribonucleotide-3'-[RNA].. In terms of biological role, this is a non-secretory ribonuclease. It is a pyrimidine specific nuclease with a slight preference for U. Cytotoxin and helminthotoxin. Possesses a wide variety of biological activities. The protein is Non-secretory ribonuclease (RNASE2) of Saguinus oedipus (Cotton-top tamarin).